The sequence spans 355 residues: MSSTQFDGDIDSFVSYLKSNRGLSANTLKAYRADLTACLHLFELRGVTDLNEITLDDLRSWMAVESRDHARSSMARKTVAVRGFFAWAYEHGLTTTDPAATLMTPSIPSTLPAVLTESQAEQLLDVAEHAVATNQYKDDGGAAAAPGSGKAAGKTADKSADTVNRSEAPARADKRDNARVTAESQRNAAILELLYATGIRVAELVSMDIADIDFSNRTIKVTGKGNKQRVVPFGLPAQRALETWLEQGRPVLARTATDAVKSRAANALFLGARGGRIDQRIARDIVHRAAREAGVPDISPHALRHSAATHMLDGGADLREVQEMLGHSSLKTTQRYTHVSIEQLKNRYGQAFPRA.

Positions 4 to 89 constitute a Core-binding (CB) domain; that stretch reads TQFDGDIDSF…AVRGFFAWAY (86 aa). The tract at residues 137-181 is disordered; it reads KDDGGAAAAPGSGKAAGKTADKSADTVNRSEAPARADKRDNARVT. A compositionally biased stretch (low complexity) spans 141–154; the sequence is GAAAAPGSGKAAGK. Positions 158–349 constitute a Tyr recombinase domain; the sequence is KSADTVNRSE…SIEQLKNRYG (192 aa). Residues 168–178 are compositionally biased toward basic and acidic residues; the sequence is APARADKRDNA. Catalysis depends on residues R200, K224, H301, R304, and H327. Catalysis depends on Y336, which acts as the O-(3'-phospho-DNA)-tyrosine intermediate.

Belongs to the 'phage' integrase family. XerC subfamily. Forms a cyclic heterotetrameric complex composed of two molecules of XerC and two molecules of XerD.

The protein localises to the cytoplasm. In terms of biological role, site-specific tyrosine recombinase, which acts by catalyzing the cutting and rejoining of the recombining DNA molecules. The XerC-XerD complex is essential to convert dimers of the bacterial chromosome into monomers to permit their segregation at cell division. It also contributes to the segregational stability of plasmids. The protein is Tyrosine recombinase XerC of Bifidobacterium longum (strain DJO10A).